A 602-amino-acid chain; its full sequence is MSATLLVPSMTVKAADTIYNNKTGNQDGYDYELWKDTGNTSMTLNAGGTFDCSWSNINNALFRKGKKFDSTQTYQQIGNITFDYGCDYRPNGNSYLCVYGWTVDPLVEYYIVDSWGTWRPPGGTPKGQIQVDGGTYDVYETTRYNAPSIQGDTTFKQYFSVRTSKRTSGTISVSEHFKAWERMGMRCGNFMKPALNIEGYQSSGSASVYKNNMTIGGSSSSSGNQGGNQGGNTGNENAGNNLVTVADADKIQCETMTKSGQYTGNISSPFNGVALYANNDAVKYTQYFASGTHDFTLRGCSNNNKMARVDLKIGGQNKGTFYYGDSYPAEYTIKNVSHGTGNQTIELVVTADDGQWDAYLDYFNNSVEPGCSLVPGAVVVLVALGSSSNTGNNSGTNTQNQKLIALTFDDGPSSTTSQVLDMLEKYNVKATFFLIGQNVNSNTASIVQRQVKMGCELACHSYTHEDMTKMNASQIRNQIDWTASAIKNTAGVDVKFFRPPYISVNNTMYQNIDLPFIQGSMHNDWESSTSASQRVNSVLSSAKDGDIILLHDFQGNSQTVSALPQIIEGLKNQGYTFVTVSELFEMKGVNPNVEYKIWSNVK.

The first 14 residues, 1–14 (MSATLLVPSMTVKA), serve as a signal peptide directing secretion. The region spanning 17–211 (TIYNNKTGNQ…SSGSASVYKN (195 aa)) is the GH11 domain. Residue glutamate 108 is the Nucleophile of the active site. Glutamate 198 serves as the catalytic Proton donor. Residues 216–240 (GGSSSSSGNQGGNQGGNTGNENAGN) form a disordered region. Positions 224 to 233 (NQGGNQGGNT) are enriched in gly residues. One can recognise a CBM6 domain in the interval 249-366 (DKIQCETMTK…DAYLDYFNNS (118 aa)). In terms of domain architecture, NodB homology spans 402-578 (KLIALTFDDG…GLKNQGYTFV (177 aa)).

This sequence belongs to the glycosyl hydrolase 11 (cellulase G) family. In terms of processing, in the later growth phases, seems to undergo a proteolytic cleavage into a 30 kDa protein possessing xylanolytic activity.

Its subcellular location is the secreted. The catalysed reaction is Endohydrolysis of (1-&gt;4)-beta-D-xylosidic linkages in xylans.. The protein operates within glycan degradation; xylan degradation. Functionally, endo-acting xylanase which specifically cleaves internal linkages on the xylan backbone, releasing xylooligosaccharides. Is also probably able, via its C-terminal domain, to remove acetyl groups from acetylated xylan, and thus it is probably capable of hydrolyzing acetylated xylan. The sequence is that of Bifunctional xylanase/deacetylase (xyn11A) from Pseudobutyrivibrio xylanivorans.